The sequence spans 155 residues: Xanthine-guanine phosphoribosyltransferase (155 aa).

Residues 37–38, R69, and 90–98 contribute to the 5-phospho-alpha-D-ribose 1-diphosphate site; these read RG and EDLVDTGTT. GMP is bound at residue R69. D91 serves as a coordination point for Mg(2+). Guanine contacts are provided by D94 and I137. Positions 94 and 137 each coordinate xanthine. GMP-binding positions include 94–98 and 136–137; these read DTGTT and WI.

It belongs to the purine/pyrimidine phosphoribosyltransferase family. XGPT subfamily. As to quaternary structure, homotetramer. Mg(2+) serves as cofactor.

The protein localises to the cell inner membrane. The catalysed reaction is GMP + diphosphate = guanine + 5-phospho-alpha-D-ribose 1-diphosphate. It carries out the reaction XMP + diphosphate = xanthine + 5-phospho-alpha-D-ribose 1-diphosphate. It catalyses the reaction IMP + diphosphate = hypoxanthine + 5-phospho-alpha-D-ribose 1-diphosphate. It functions in the pathway purine metabolism; GMP biosynthesis via salvage pathway; GMP from guanine: step 1/1. The protein operates within purine metabolism; XMP biosynthesis via salvage pathway; XMP from xanthine: step 1/1. Functionally, purine salvage pathway enzyme that catalyzes the transfer of the ribosyl-5-phosphate group from 5-phospho-alpha-D-ribose 1-diphosphate (PRPP) to the N9 position of the 6-oxopurines guanine and xanthine to form the corresponding ribonucleotides GMP (guanosine 5'-monophosphate) and XMP (xanthosine 5'-monophosphate), with the release of PPi. To a lesser extent, also acts on hypoxanthine. The chain is Xanthine-guanine phosphoribosyltransferase from Aeromonas hydrophila subsp. hydrophila (strain ATCC 7966 / DSM 30187 / BCRC 13018 / CCUG 14551 / JCM 1027 / KCTC 2358 / NCIMB 9240 / NCTC 8049).